We begin with the raw amino-acid sequence, 66 residues long: Large ribosomal subunit protein bL32 (66 aa).

This sequence belongs to the bacterial ribosomal protein bL32 family.

The sequence is that of Large ribosomal subunit protein bL32 from Rickettsia canadensis (strain McKiel).